The primary structure comprises 486 residues: Siroheme synthase (486 aa).

The precorrin-2 dehydrogenase /sirohydrochlorin ferrochelatase stretch occupies residues 1-204 (MNYLPIFVDL…HQIEQAEALV (204 aa)). NAD(+)-binding positions include 22–23 (HI) and 43–44 (EK). Ser-128 carries the post-translational modification Phosphoserine. The segment at 216 to 486 (GEVSLVGAGP…NKETHWKQAA (271 aa)) is uroporphyrinogen-III C-methyltransferase. Pro-225 lines the S-adenosyl-L-methionine pocket. Asp-248 serves as the catalytic Proton acceptor. Lys-270 acts as the Proton donor in catalysis. S-adenosyl-L-methionine contacts are provided by residues 301–303 (GGD), Val-306, 331–332 (TA), Met-383, and Gly-412.

In the N-terminal section; belongs to the precorrin-2 dehydrogenase / sirohydrochlorin ferrochelatase family. The protein in the C-terminal section; belongs to the precorrin methyltransferase family.

It catalyses the reaction uroporphyrinogen III + 2 S-adenosyl-L-methionine = precorrin-2 + 2 S-adenosyl-L-homocysteine + H(+). The catalysed reaction is precorrin-2 + NAD(+) = sirohydrochlorin + NADH + 2 H(+). The enzyme catalyses siroheme + 2 H(+) = sirohydrochlorin + Fe(2+). The protein operates within cofactor biosynthesis; adenosylcobalamin biosynthesis; precorrin-2 from uroporphyrinogen III: step 1/1. It participates in cofactor biosynthesis; adenosylcobalamin biosynthesis; sirohydrochlorin from precorrin-2: step 1/1. It functions in the pathway porphyrin-containing compound metabolism; siroheme biosynthesis; precorrin-2 from uroporphyrinogen III: step 1/1. Its pathway is porphyrin-containing compound metabolism; siroheme biosynthesis; siroheme from sirohydrochlorin: step 1/1. The protein operates within porphyrin-containing compound metabolism; siroheme biosynthesis; sirohydrochlorin from precorrin-2: step 1/1. Multifunctional enzyme that catalyzes the SAM-dependent methylations of uroporphyrinogen III at position C-2 and C-7 to form precorrin-2 via precorrin-1. Then it catalyzes the NAD-dependent ring dehydrogenation of precorrin-2 to yield sirohydrochlorin. Finally, it catalyzes the ferrochelation of sirohydrochlorin to yield siroheme. The chain is Siroheme synthase from Actinobacillus pleuropneumoniae serotype 3 (strain JL03).